The following is a 366-amino-acid chain: tRNA(Met) cytidine acetate ligase (366 aa).

ATP contacts are provided by residues 7-20 (VAEF…HKYL), G96, N152, and R175.

Belongs to the TmcAL family.

The protein resides in the cytoplasm. The catalysed reaction is cytidine(34) in elongator tRNA(Met) + acetate + ATP = N(4)-acetylcytidine(34) in elongator tRNA(Met) + AMP + diphosphate. Functionally, catalyzes the formation of N(4)-acetylcytidine (ac(4)C) at the wobble position of elongator tRNA(Met), using acetate and ATP as substrates. First activates an acetate ion to form acetyladenylate (Ac-AMP) and then transfers the acetyl group to tRNA to form ac(4)C34. The sequence is that of tRNA(Met) cytidine acetate ligase from Streptococcus uberis (strain ATCC BAA-854 / 0140J).